The primary structure comprises 206 residues: High frequency lysogenization protein HflD homolog (206 aa).

This sequence belongs to the HflD family.

It is found in the cytoplasm. Its subcellular location is the cell inner membrane. This chain is High frequency lysogenization protein HflD homolog, found in Pseudomonas syringae pv. syringae (strain B728a).